A 404-amino-acid polypeptide reads, in one-letter code: Acetate kinase (404 aa).

Mg(2+) is bound at residue Asn7. Lys14 is an ATP binding site. Substrate is bound at residue Arg95. Asp152 acts as the Proton donor/acceptor in catalysis. ATP contacts are provided by residues His212 to Gly216, Asp286 to Arg288, and Gly334 to Asn338. Glu388 provides a ligand contact to Mg(2+).

This sequence belongs to the acetokinase family. In terms of assembly, homodimer. Requires Mg(2+) as cofactor. The cofactor is Mn(2+).

The protein resides in the cytoplasm. The enzyme catalyses acetate + ATP = acetyl phosphate + ADP. It functions in the pathway metabolic intermediate biosynthesis; acetyl-CoA biosynthesis; acetyl-CoA from acetate: step 1/2. In terms of biological role, catalyzes the formation of acetyl phosphate from acetate and ATP. Can also catalyze the reverse reaction. This Lawsonia intracellularis (strain PHE/MN1-00) protein is Acetate kinase.